The following is a 589-amino-acid chain: NADP-dependent malic enzyme (589 aa).

Y137 (proton donor) is an active-site residue. R190 lines the NAD(+) pocket. The active-site Proton acceptor is K208. A divalent metal cation-binding residues include E280, D281, and D304. D304 contacts NAD(+). 333-349 (LFLGAGEAGTGIAELIA) serves as a coordination point for NADP(+). NAD(+) is bound at residue N445.

This sequence belongs to the malic enzymes family. In terms of assembly, homotetramer. It depends on Mg(2+) as a cofactor. Mn(2+) is required as a cofactor.

It is found in the cytoplasm. The catalysed reaction is (S)-malate + NADP(+) = pyruvate + CO2 + NADPH. It carries out the reaction oxaloacetate + H(+) = pyruvate + CO2. The sequence is that of NADP-dependent malic enzyme (ME1) from Phaseolus vulgaris (Kidney bean).